A 288-amino-acid polypeptide reads, in one-letter code: Rhox homeobox family member 2 (288 aa).

A disordered region spans residues 16–136; that stretch reads SPAVDDEKEL…GLEPGNAQQP (121 aa). Acidic residues predominate over residues 39-48; it reads VKEEEEDAQP. A compositionally biased stretch (basic and acidic residues) spans 68–80; it reads GEEKDGGGEEKDG. Residues 134 to 193 constitute a DNA-binding region (homeobox); sequence QQPNVHAFTPLQLQELERIFQREQFPSEFLRRRLARSMNVTELAVQIWFENRRAKWRRHQ. The Nuclear localization signal signature appears at 186–195; it reads RAKWRRHQRA.

It belongs to the paired-like homeobox family. PEPP subfamily. Testis. Not detected in epididymis nor placenta. In testis, mainly expressed in germ cells, but also detected in somatic cells such as Sertoli cells, Leydig cells and peritubular cells.

Its subcellular location is the nucleus. In terms of biological role, transcription factor maybe involved in reproductive processes. Modulates expression of target genes encoding proteins involved in processes relevant to spermatogenesis. In Homo sapiens (Human), this protein is Rhox homeobox family member 2.